Reading from the N-terminus, the 380-residue chain is Outer membrane protein 40 (380 aa).

The signal sequence occupies residues 1 to 21 (MKAKSLLLALAGLACTFSATA). Position 22 is a pyrrolidone carboxylic acid (Gln-22). Residues 270–380 (PTVTRVVVDN…NRIVVMTAAE (111 aa)) form the OmpA-like domain.

This sequence belongs to the outer membrane OOP (TC 1.B.6) superfamily. As to quaternary structure, disulfide-linked heterodimer with Omp41.

It is found in the cell outer membrane. Functionally, may have porin activity and function in peptidoglycan binding. In Porphyromonas gingivalis (strain ATCC BAA-308 / W83), this protein is Outer membrane protein 40.